The following is a 233-amino-acid chain: Ribosome maturation factor RimM (233 aa).

The disordered stretch occupies residues 1–51 (MKRKQDSKGAGSRGQGAGEKKQGAGGRGQGEKKQKKSPVPSPQSPVPDPDE). Positions 11 to 28 (GSRGQGAGEKKQGAGGRG) are enriched in gly residues. The PRC barrel domain maps to 145–226 (GEDEYHVVDL…RIEITPPPGL (82 aa)).

It belongs to the RimM family. As to quaternary structure, binds ribosomal protein uS19.

The protein localises to the cytoplasm. Functionally, an accessory protein needed during the final step in the assembly of 30S ribosomal subunit, possibly for assembly of the head region. Essential for efficient processing of 16S rRNA. May be needed both before and after RbfA during the maturation of 16S rRNA. It has affinity for free ribosomal 30S subunits but not for 70S ribosomes. This chain is Ribosome maturation factor RimM, found in Trichormus variabilis (strain ATCC 29413 / PCC 7937) (Anabaena variabilis).